Reading from the N-terminus, the 303-residue chain is UPF0282 protein MM_2966 (303 aa).

Belongs to the UPF0282 family.

This Methanosarcina mazei (strain ATCC BAA-159 / DSM 3647 / Goe1 / Go1 / JCM 11833 / OCM 88) (Methanosarcina frisia) protein is UPF0282 protein MM_2966.